We begin with the raw amino-acid sequence, 141 residues long: Large ribosomal subunit protein uL16 (141 aa).

This sequence belongs to the universal ribosomal protein uL16 family. As to quaternary structure, part of the 50S ribosomal subunit.

In terms of biological role, binds 23S rRNA and is also seen to make contacts with the A and possibly P site tRNAs. This is Large ribosomal subunit protein uL16 from Hydrogenobaculum sp. (strain Y04AAS1).